The sequence spans 151 residues: MTTLTNPQKAAIRSSWSKFMDNGVSNGQGFYMDLFKAHPETLTPFKSLFGGLTLAQLQDNPKMKAQSLVFCNGMSSFVDHLDDNMLVVLIQKMAKLHNNRGIRASDLRTAYDILIHYMEDHNHMVGGAKDAWEVFVGFICKTLGDYMKELS.

T2 bears the N-acetylthreonine mark. One can recognise a Globin domain in the interval 3 to 148 (TLTNPQKAAI…ICKTLGDYMK (146 aa)). H97 is a heme b binding site.

It belongs to the globin family. Homotetramer.

It localises to the cytoplasm. In Phacoides pectinatus (Thick lucine), this protein is Hemoglobin-2.